The sequence spans 40 residues: Natriuretic peptide TNPd (40 aa).

A disulfide bridge links Cys9 with Cys25.

Belongs to the natriuretic peptide family. Expressed by the venom gland.

It is found in the secreted. Snake venom natriuretic peptide that exhibits vasoactive and hypotensive activity. Stimulates cGMP production through the natriuretic peptide receptor 1 (NPR1) with very high potencies for the rat NPR1 (EC(50)=18 nM), and very weak potencies over human NPR1 (30% activation at 10 uM). The protein is Natriuretic peptide TNPd of Oxyuranus microlepidotus (Inland taipan).